The chain runs to 223 residues: Probable transaldolase (223 aa).

Catalysis depends on K92, which acts as the Schiff-base intermediate with substrate.

Belongs to the transaldolase family. Type 3B subfamily.

Its subcellular location is the cytoplasm. The enzyme catalyses D-sedoheptulose 7-phosphate + D-glyceraldehyde 3-phosphate = D-erythrose 4-phosphate + beta-D-fructose 6-phosphate. The protein operates within carbohydrate degradation; pentose phosphate pathway; D-glyceraldehyde 3-phosphate and beta-D-fructose 6-phosphate from D-ribose 5-phosphate and D-xylulose 5-phosphate (non-oxidative stage): step 2/3. Its function is as follows. Transaldolase is important for the balance of metabolites in the pentose-phosphate pathway. This Thermus thermophilus (strain ATCC 27634 / DSM 579 / HB8) protein is Probable transaldolase.